A 54-amino-acid polypeptide reads, in one-letter code: Large ribosomal subunit protein bL33C (54 aa).

This sequence belongs to the bacterial ribosomal protein bL33 family.

This is Large ribosomal subunit protein bL33C from Streptomyces griseus subsp. griseus (strain JCM 4626 / CBS 651.72 / NBRC 13350 / KCC S-0626 / ISP 5235).